The primary structure comprises 291 residues: Beta-lactamase CTX-M-25 (291 aa).

Positions 1–30 (MMRKSVRRAMLMTTACVSLLLASVPLCAQA) are cleaved as a signal peptide. The active-site Nucleophile; acyl-ester intermediate is the serine 73. Residues lysine 76, serine 133, glutamate 169, and serine 240 each coordinate a beta-lactam.

It belongs to the class-A beta-lactamase family. In terms of assembly, monomer.

It is found in the secreted. The enzyme catalyses a beta-lactam + H2O = a substituted beta-amino acid. Inhibited by the beta-lactamase-blocking agents clavulanic acid and tazobactam; in the DH10B strain. Functionally, extended-spectrum beta-lactamase (ESBL) which confers resistance to penicillins, as well as first, second and third-generation cephalosporins. Has cefotaxime-hydrolyzing activity. Inactive against cephalosporin antibiotic, cefoxitin, and the carbapenem, imipenem. This Escherichia coli protein is Beta-lactamase CTX-M-25.